A 1133-amino-acid chain; its full sequence is ATP-dependent DNA helicase homolog MER3 (1133 aa).

In terms of domain architecture, Helicase ATP-binding spans 34-229 (PLCFHSDINM…WLKVPTAGIK (196 aa)). Residue 47-54 (APTGSGKT) coordinates ATP. A DEVH box motif is present at residues 165–168 (DEVH). A Helicase C-terminal domain is found at 263 to 460 (YIYDILMQYS…CLIEHLTAEI (198 aa)). One can recognise an SEC63 domain in the interval 536–847 (EPGRLMTKYY…FEEYIGIDLH (312 aa)). Residues 878 to 919 (ACIADDDNPVTSGPSNRKDKKDDMPSFKLIDDDSEEEKEPYV) form a disordered region. The segment covering 893–908 (NRKDKKDDMPSFKLID) has biased composition (basic and acidic residues). The segment covering 909-919 (DDSEEEKEPYV) has biased composition (acidic residues).

It belongs to the helicase family. SKI2 subfamily. Expressed in meiocytes during meiosis.

The protein resides in the nucleus. It carries out the reaction Couples ATP hydrolysis with the unwinding of duplex DNA by translocating in the 3'-5' direction.. The enzyme catalyses ATP + H2O = ADP + phosphate + H(+). DNA helicase required for crossover formation, complete synapsis of homologous chromosomes and bivalent formation during meiosis. Is specific to recombination events resulting in interference-sensitive crossovers (class I meiotic crossover). This chain is ATP-dependent DNA helicase homolog MER3, found in Arabidopsis thaliana (Mouse-ear cress).